We begin with the raw amino-acid sequence, 551 residues long: Putative transport protein NTHI0043 (551 aa).

5 helical membrane passes run 4 to 24 (IAIT…IGHW), 28 to 48 (GVGL…HFTN), 65 to 85 (FGLI…FFSS), 95 to 115 (AFAI…HKIA), and 157 to 177 (VSYA…MWLI). RCK C-terminal domains lie at 191–275 (RFNA…IIGY) and 277–360 (VDAP…VIGN). 6 consecutive transmembrane segments (helical) span residues 370–390 (MLPV…PFYI), 402–424 (AGGP…LYWF), 438–458 (IVLF…DTLV), 463–483 (LEWM…TGIL), 492–512 (YLTI…LAFA), and 529–549 (VYPL…VLLW).

Belongs to the AAE transporter (TC 2.A.81) family. YidE subfamily.

The protein resides in the cell membrane. This chain is Putative transport protein NTHI0043, found in Haemophilus influenzae (strain 86-028NP).